Here is a 445-residue protein sequence, read N- to C-terminus: MTRDKKYYICSNCANISNKWSGQCFDCGVWGSIVEEIINTNKSIIKGSKQTFDKLSCNVSEQLRIPTPICELNRVLGGGLVLGSAILIGGEPGIGKSTLLLQLTASNFESEMRCLYITGEESLDQIKLRAIRLNITNYNTAILAATNLEDIIASIDDNNNNIDLVVIDSIQTITTKELSSPPGTVSQIRTCANELVNYSKQNNIIILLSCHVTKDGQIAGPKILEHLVDTVLYFEGDHNNHFRILRSYKNRFGGVGEIGVFEMSNSGIIEVTNHSELFLIKREHNVVGTSIFAGIEGSRPLLMEVQALIVPSNMVTPRRSAVGWDANRLSMILAVLSSRIGLNLANYEIYLSIAGGLKIADPASDLAVAASLISAATSIPLPEHSVFFGEISLSGEIRKTAKAETRIKEAVKLGFNKVICSKLENLTYDFIFPCAHLQELKEIIK.

A C4-type zinc finger spans residues 10-27; that stretch reads CSNCANISNKWSGQCFDC. Residue 90-97 participates in ATP binding; it reads GEPGIGKS. The short motif at 249 to 253 is the RadA KNRFG motif element; it reads KNRFG. Positions 348–445 are lon-protease-like; it reads EIYLSIAGGL…HLQELKEIIK (98 aa).

It belongs to the RecA family. RadA subfamily.

DNA-dependent ATPase involved in processing of recombination intermediates, plays a role in repairing DNA breaks. Stimulates the branch migration of RecA-mediated strand transfer reactions, allowing the 3' invading strand to extend heteroduplex DNA faster. Binds ssDNA in the presence of ADP but not other nucleotides, has ATPase activity that is stimulated by ssDNA and various branched DNA structures, but inhibited by SSB. Does not have RecA's homology-searching function. This is DNA repair protein RadA from Rickettsia prowazekii (strain Madrid E).